A 302-amino-acid polypeptide reads, in one-letter code: MQTVIHRKTIQNSVTLKGIGVHSGKVVTLRLHPAEANTGLIFYLYKGIQKIRIPVSLDHVVDTSNATTIGDGSSNRVQTIEHLLAAVHTLGITDCIFEIDSVEVPIMDGSSLPFWEGIRSAGIRVLEETIEPITITNPIWVVDGDKYLVMLPSDELKVTYSIDFNHPLLRGQSYTTTLDESILGTDILPARTFGFLKDVEALQARGLAMGGSLDNAVVLTDDGYLNDHLRYDNECVRHKILDLVGDLAVMGRPFRGHLIASKAGHALDISLAKCIMSQVTGNELTQYKSKRIPLFSKKEAAK.

Histidine 82, histidine 238, and aspartate 242 together coordinate Zn(2+). The active-site Proton donor is histidine 265.

The protein belongs to the LpxC family. Zn(2+) serves as cofactor.

The enzyme catalyses a UDP-3-O-[(3R)-3-hydroxyacyl]-N-acetyl-alpha-D-glucosamine + H2O = a UDP-3-O-[(3R)-3-hydroxyacyl]-alpha-D-glucosamine + acetate. It functions in the pathway glycolipid biosynthesis; lipid IV(A) biosynthesis; lipid IV(A) from (3R)-3-hydroxytetradecanoyl-[acyl-carrier-protein] and UDP-N-acetyl-alpha-D-glucosamine: step 2/6. Its function is as follows. Catalyzes the hydrolysis of UDP-3-O-myristoyl-N-acetylglucosamine to form UDP-3-O-myristoylglucosamine and acetate, the committed step in lipid A biosynthesis. This is UDP-3-O-acyl-N-acetylglucosamine deacetylase from Leptospira biflexa serovar Patoc (strain Patoc 1 / Ames).